Consider the following 641-residue polypeptide: E3 ubiquitin-protein ligase TRIM47 (641 aa).

The segment at 9-58 (CPICLEPLREPVTLPCGHNFCLACLGALWPHRSAGGTGGSGGPARCPLCQ) adopts an RING-type zinc-finger fold. A Phosphothreonine modification is found at T72. A disordered region spans residues 81 to 123 (QGSVPGPMSAPASGSTRGATPEPSAPSAPPPAPEPSAPCAPEQ). Residues 103–118 (PSAPSAPPPAPEPSAP) are compositionally biased toward pro residues. The B box-type zinc finger occupies 181-221 (LEESLCPRHLRPLERYCRVERVCLCEACATQDHRGHELVPL). Zn(2+) is bound by residues C186, H189, C208, and H213. Positions 305–325 (QGDLRRQEEQRSRLSKARHNL) form a coiled coil. S393 is subject to Phosphoserine. The tract at residues 396–416 (DGLQKLGSEDVESQDPDSTSL) is disordered. The B30.2/SPRY domain occupies 413–634 (STSLLESEAP…LQIGPLKKSC (222 aa)). S464 is modified (phosphoserine). An Omega-N-methylarginine modification is found at R585. S591 carries the phosphoserine modification.

The protein belongs to the TRIM/RBCC family. Expressed in hepatocytes, expression is increased in fatty livers.

Its subcellular location is the cytoplasm. The protein resides in the nucleus. It catalyses the reaction S-ubiquitinyl-[E2 ubiquitin-conjugating enzyme]-L-cysteine + [acceptor protein]-L-lysine = [E2 ubiquitin-conjugating enzyme]-L-cysteine + N(6)-ubiquitinyl-[acceptor protein]-L-lysine.. It participates in protein modification; protein ubiquitination. E3 ubiquitin-protein ligase that mediates the ubiquitination and proteasomal degradation of CYLD. The chain is E3 ubiquitin-protein ligase TRIM47 from Mus musculus (Mouse).